Here is a 152-residue protein sequence, read N- to C-terminus: Large ribosomal subunit protein uL15 (152 aa).

Positions 1–79 are disordered; the sequence is MRLNELSPPP…GRHTPAHPKV (79 aa). Residues 22–35 show a composition bias toward gly residues; it reads GEGSGYGKTSGRGQ.

It belongs to the universal ribosomal protein uL15 family. In terms of assembly, part of the 50S ribosomal subunit.

Its function is as follows. Binds to the 23S rRNA. The sequence is that of Large ribosomal subunit protein uL15 from Rubrobacter xylanophilus (strain DSM 9941 / JCM 11954 / NBRC 16129 / PRD-1).